We begin with the raw amino-acid sequence, 737 residues long: uncharacterized protein (737 aa).

The next 7 helical transmembrane spans lie at 11 to 31, 36 to 56, 60 to 80, 118 to 138, 142 to 162, 164 to 184, and 200 to 220; these read LSLLLFYFLAFLLLWEWLRPL, ETKHTGFFSVFIGLTFLLTFF, WFVTVPFCVIFTLISIHILFY, TLLFFVLLWLLVYLLHYWVIY, ILFFFLMTVAYITILDTFTPY, ATFAVIRIVLIGFFMLGLLYL, and VLKWFLPLSVLVLAATGFGLA. The disordered stretch occupies residues 556–611; sequence PAQFTSSDTKDSGSDSSSSPKKAKEKQKEEKKQPQKEEKQKEKREPAVSKKPSASH. The span at 581–603 shows a compositional bias: basic and acidic residues; it reads KQKEEKKQPQKEEKQKEKREPAV. A helical transmembrane segment spans residues 618 to 638; the sequence is LYAALAVLAVLLVAAVLLYVF.

Its subcellular location is the cell membrane. This is an uncharacterized protein from Bacillus subtilis (strain 168).